The following is a 239-amino-acid chain: Transcriptional regulatory protein BtsR (239 aa).

In terms of domain architecture, Response regulatory spans 3–116 (KVLIVDDEPL…RLEKTLARLR (114 aa)). The residue at position 54 (D54) is a 4-aspartylphosphate. An HTH LytTR-type domain is found at 137-239 (IPCTGHSRIY…LKSLKEAIGL (103 aa)).

In terms of processing, phosphorylated by BtsS.

In terms of biological role, member of the two-component regulatory system BtsS/BtsR. BtsR regulates expression of btsT by binding to its promoter region. This Shigella flexneri protein is Transcriptional regulatory protein BtsR.